The chain runs to 278 residues: Ribosomal RNA small subunit methyltransferase A (278 aa).

6 residues coordinate S-adenosyl-L-methionine: asparagine 27, leucine 29, glycine 54, glutamate 75, aspartate 101, and asparagine 120.

Belongs to the class I-like SAM-binding methyltransferase superfamily. rRNA adenine N(6)-methyltransferase family. RsmA subfamily.

Its subcellular location is the cytoplasm. The enzyme catalyses adenosine(1518)/adenosine(1519) in 16S rRNA + 4 S-adenosyl-L-methionine = N(6)-dimethyladenosine(1518)/N(6)-dimethyladenosine(1519) in 16S rRNA + 4 S-adenosyl-L-homocysteine + 4 H(+). In terms of biological role, specifically dimethylates two adjacent adenosines (A1518 and A1519) in the loop of a conserved hairpin near the 3'-end of 16S rRNA in the 30S particle. May play a critical role in biogenesis of 30S subunits. The chain is Ribosomal RNA small subunit methyltransferase A from Zymomonas mobilis subsp. mobilis (strain ATCC 31821 / ZM4 / CP4).